A 284-amino-acid chain; its full sequence is Circadian clock oscillator protein KaiA (284 aa).

Residues 1-135 (MLSQIAICIW…LRLAPVETMA (135 aa)) are psR domain, binds oxidized quinones. The KaiA N-terminal domain occupies 1–164 (MLSQIAICIW…DLAQRLQERL (164 aa)). Residues 165–173 (GYLGVYYKR) form a flexible linker region. The KaiA C-terminal domain maps to 174–282 (DPDRFLRNLP…CEMYRRSIPR (109 aa)).

The protein belongs to the KaiA family. As to quaternary structure, homodimer. The KaiABC complex composition changes during the circadian cycle to control KaiC phosphorylation. Complexes KaiC(6), KaiA(2-4):KaiC(6), KaiB(6):KaiC(6) and KaiC(6):KaiB(6):KaiA(12) are among the most important forms, many form cooperatively. The KaiA:KaiB complex is only found at 20-24 hours in the circadian cycle (subjective night). Binds to the C-terminal A-loop of KaiC via a coiled-coil structure. KaiA and CikA compete for binding to KaiB(fs). CikA copurifies with this protein in the clock complex. Interacts with LdpA.

Binding of oxidized quinones (produced as darkness falls) prevents KaiA from stimulating KaiC autophosphorylation. Functionally, key component of the KaiABC oscillator complex, which constitutes the main circadian regulator in cyanobacteria. Complex composition changes during the circadian cycle to control KaiC phosphorylation. KaiA stimulates KaiC autophosphorylation, while KaiB sequesters KaiA, leading to KaiC autodephosphorylation. KaiA binding to the KaiC CII domain during the subjective day yields KaiA(2-4):KaiC(6) complexes which stimulate KaiC autophosphorylation. A KaiA dimer is sufficient to enhance KaiC hexamer phosphorylation. Phospho-Ser-431 KaiC accumulation triggers binding of KaiB during the subjective night to form the KaiB(6):KaiC(6) complex, leading to changes in the output regulators CikA and SasA. KaiB(6):KaiC(6) formation exposes a site for KaiA binding on KaiB that sequesters KaiA from KaiC's CII domain, making the KaiC(6):KaiB(6):KaiA(12) complex resulting in KaiC autodephosphorylation. Complete dephosphorylation of KaiC leads to dissociation of KaiA(2):KaiB(1), completing 1 cycle of the Kai oscillator. In terms of biological role, circadian oscillations can be generated in vitro by incubating KaiA, KaiB and KaiC with 1 mM ATP. The cycle is self-sustainable for at least 3 cycles and resistant to temperature changes. A very robust clock is reconstituted with KaiA, KaiB, KaiC, SasA, CikA and RpaA; output is measured by transcription from an appropriate reporter. KaiA binds oxidized quinones via its N-terminal PsR domain and is able to sense redox signals directly; quinone analog DBMIB (2,5-dibromo-3-methyl-6-isopropyl-p-benzoquinone) blocks KaiA stimulation of KaiC phosphorylation. The homodimer binds up to 8 quinones in the crystal structure, 3 in the PsR domain and 1 via the C-terminal helical bundle. Binding of oxidized quinone to the KaiA C-terminal domain reduces the phosphorylation of KaiC slightly; quinones may interact in a complex manner with KaiA to mediate clock input. The polypeptide is Circadian clock oscillator protein KaiA (Synechococcus elongatus (strain ATCC 33912 / PCC 7942 / FACHB-805) (Anacystis nidulans R2)).